Consider the following 905-residue polypeptide: MSEKGETLIEDTAEIEFEQTVDKTQQWGRLKNAAAFSLFRDLHMNESLQRKHARSDYKVYDLNNRVIFHVINTTAMPITKDGPFCLKVMNKDKKSVAKFLRNEPKRSYKQTGLASLFGCCSDTEDTMEVLDDNGLIIATSFLHHDQFRGILITMKDPAGKVLIGIQASRDQKDVFAVSGPDNRYLGEIRQKIISSGNSTDNYKGVACWFSTEVSLNVKVFFMAAAFLIEIDYFSETKSRQAPFRTPEADYLNPIIKTPPHNERVPKMKTNISKTRKKKGKVSDASKDSRPSETKKETLMMPEIHHTKHFDSIGGEEQAFAKKEKVEEFKPTEAVKEEVDVNGMSRDQFRNAAKKVVDYLMKQDESIRAARCSPALKPGYLKALLPPKAPQKAEDIDDILEDYHKLIVPGLSHSSHPNFHSFYPAGNSFHCLLADLLGGHIGDAGFYWTSNPALTELEVLMMDWLGEMMALPKEFLLFPEASRGGGCMQRSDTESNFLVLVAARTDMIRRMKQRDKRLRSSDILARLVAYTSSDARRSIKMKMAAEVAMVKMRVLPTDQNFILRGDTLHAAIMADIERGLIPFFVGANFGTSGPCSFDHLHELGPVCREHGTWLHVDAAYAGTALICPEIRGLMRGIDWADSFCTTPSKLIIAVCDVCCLWVRDRHKLQHASLENHPDLPFKGLPTSQRVGALKIWFMIRSFGVENLQNQIREHIRLGQVMTKILQKDLRFEVCNKVVMGLICFRAKSNDMFNKALLYRCNETGNVSLASCVLQNKFVIRMCINSPKCSEEDLDSAYKLICNEYDILKPFQYRIEVMNQAELETFIRDPAKIHSSAEVSRRFPVVNPLEPCRSLAQISSQMHTAEYADPPGKSNKSPQVAAKGELPSAAPPSSRTPNSDISEKSDR.

The disordered stretch occupies residues tyrosine 250–glutamate 296. Positions lysine 280–glutamate 296 are enriched in basic and acidic residues. Threonine 492 and serine 591 together coordinate pyridoxal 5'-phosphate. The residue at position 648 (lysine 648) is an N6-(pyridoxal phosphate)lysine. The segment at histidine 861–arginine 905 is disordered. Polar residues predominate over residues proline 889 to aspartate 898.

It belongs to the group II decarboxylase family. In terms of assembly, homodimer. Pyridoxal 5'-phosphate is required as a cofactor.

The catalysed reaction is L-dopa + H(+) = dopamine + CO2. It carries out the reaction 5-hydroxy-L-tryptophan + H(+) = serotonin + CO2. It functions in the pathway catecholamine biosynthesis; dopamine biosynthesis; dopamine from L-tyrosine: step 2/2. Catalyzes the decarboxylation of L-3,4-dihydroxyphenylalanine (DOPA) to dopamine, L-5-hydroxytryptophan to serotonin and L-tryptophan to tryptamine. The polypeptide is Probable aromatic-L-amino-acid decarboxylase (hdl-1) (Caenorhabditis elegans).